The sequence spans 350 residues: GTP 3',8-cyclase (350 aa).

The Radical SAM core domain maps to 27-245; it reads TFGRIATDLR…LRAHFTLVPD (219 aa). R36 lines the GTP pocket. Residues C43 and C47 each coordinate [4Fe-4S] cluster. Residue Y49 participates in S-adenosyl-L-methionine binding. [4Fe-4S] cluster is bound at residue C50. R87 is a binding site for GTP. An S-adenosyl-L-methionine-binding site is contributed by G91. GTP is bound at residue T118. S142 contributes to the S-adenosyl-L-methionine binding site. K179 serves as a coordination point for GTP. M213 contacts S-adenosyl-L-methionine. 2 residues coordinate [4Fe-4S] cluster: C277 and C280. 282–284 provides a ligand contact to GTP; it reads RTR. C294 contributes to the [4Fe-4S] cluster binding site.

Belongs to the radical SAM superfamily. MoaA family. Monomer and homodimer. [4Fe-4S] cluster serves as cofactor.

It catalyses the reaction GTP + AH2 + S-adenosyl-L-methionine = (8S)-3',8-cyclo-7,8-dihydroguanosine 5'-triphosphate + 5'-deoxyadenosine + L-methionine + A + H(+). The protein operates within cofactor biosynthesis; molybdopterin biosynthesis. Its function is as follows. Catalyzes the cyclization of GTP to (8S)-3',8-cyclo-7,8-dihydroguanosine 5'-triphosphate. This Mycobacterium sp. (strain JLS) protein is GTP 3',8-cyclase.